Consider the following 130-residue polypeptide: Small ribosomal subunit protein uS8 (130 aa).

The protein belongs to the universal ribosomal protein uS8 family. In terms of assembly, part of the 30S ribosomal subunit. Contacts proteins S5 and S12.

One of the primary rRNA binding proteins, it binds directly to 16S rRNA central domain where it helps coordinate assembly of the platform of the 30S subunit. The polypeptide is Small ribosomal subunit protein uS8 (Vibrio campbellii (strain ATCC BAA-1116)).